Consider the following 1828-residue polypeptide: Unconventional myosin-Va (1828 aa).

A2 is modified (N-acetylalanine). Positions 8–60 (TKFARVWIPDPEEVWKSAELLKDYKPGDKVLLLHLEEGKDLEYRLDPKTSELP) constitute a Myosin N-terminal SH3-like domain. The 695-residue stretch at 69–763 (VGENDLTALS…QVAYLEKLRA (695 aa)) folds into the Myosin motor domain. 163-170 (GESGAGKT) is an ATP binding site. The disordered stretch occupies residues 599–633 (ISPTSATSSGRTPLTRVPVKPTKGRPGQTAKEHKK). S600 carries the post-translational modification Phosphoserine. A compositionally biased stretch (polar residues) spans 600–610 (SPTSATSSGRT). The segment at 643–665 (LHLLMETLNATTPHYVRCIKPND) is actin-binding. IQ domains follow at residues 766–788 (LRAA…RYLC), 789–813 (MQRA…KFLR), 814–836 (RTKA…KYKI), 837–861 (RRAA…RKIL), 862–884 (REHK…HYKR), and 885–914 (TMKA…EARS). 2 coiled-coil regions span residues 914 to 1239 (SVER…EVNA) and 1314 to 1418 (GLKE…ELEV). T1032 is subject to Phosphothreonine. The disordered stretch occupies residues 1105-1147 (VPKPGHKRTDSTHSSNESEYTFSSEFAETEDIAPRTEEPTEKK). The span at 1116–1130 (THSSNESEYTFSSEF) shows a compositional bias: polar residues. Residues 1136–1147 (IAPRTEEPTEKK) are compositionally biased toward basic and acidic residues. 2 positions are modified to phosphoserine: S1425 and S1625. The 277-residue stretch at 1507 to 1783 (TSTINSIKKV…IRTIQVRLRD (277 aa)) folds into the Dilute domain. A Phosphothreonine modification is found at T1733.

Belongs to the TRAFAC class myosin-kinesin ATPase superfamily. Myosin family. As to quaternary structure, may be a homodimer, which associates with multiple calmodulin or myosin light chains. Interacts with RIPL2, the interaction is required for its role in dendrite formation. Interacts with MLPH. Interacts with SYTL4. Interacts with MYRIP. Interacts with RAB10; mediates the transport to the plasma membrane of SLC2A4/GLUT4 storage vesicles. Interacts with FMR1; this interaction occurs in association with polyribosome.

The catalysed reaction is ATP + H2O = ADP + phosphate + H(+). Processive actin-based motor that can move in large steps approximating the 36-nm pseudo-repeat of the actin filament. Can hydrolyze ATP in the presence of actin, which is essential for its function as a motor protein. Involved in melanosome transport. Also mediates the transport of vesicles to the plasma membrane. May also be required for some polarization process involved in dendrite formation. The protein is Unconventional myosin-Va (Myo5a) of Rattus norvegicus (Rat).